A 149-amino-acid chain; its full sequence is Ribonuclease-like 3 (149 aa).

The first 22 residues, 1-22 (MGIHQCTAVVLLLLCASLSTYG), serve as a signal peptide directing secretion. At Gln23 the chain carries Pyrrolidone carboxylic acid. His38 acts as the Proton acceptor in catalysis. 3 cysteine pairs are disulfide-bonded: Cys48–Cys109, Cys66–Cys120, and Cys84–Cys135. 67–71 (KEVNT) contacts substrate. The Proton donor role is filled by His142.

The protein belongs to the pancreatic ribonuclease family. Post-translationally, cleavage between Arg-55 and Arg-56 is catalyzed by a membrane-localized Gram-negative bacterium protease (OmpT in E.coli). The excised fragment is then transported to the bacterium cytosol for cleavage of the disulfide bridge linking Cys-48 and Cys-109, thus separating the N-terminal and LF-ZF3. LF-ZF3 but not the N-terminal peptide possesses bactericidal activity. As to expression, strongly expressed in the adult liver and gut, and weakly in the heart and testis.

The protein localises to the secreted. In terms of biological role, ribonuclease. Angiogenic. Plays a role in host defense. Exhibits strong antibacterial activity against Gram-negative bacteria but mild antibacterial activity against Gram-positive bacteria. The RNase activity is not required for the bactericidal activity. In Danio rerio (Zebrafish), this protein is Ribonuclease-like 3.